We begin with the raw amino-acid sequence, 131 residues long: Small ribosomal subunit protein uS8 (131 aa).

This sequence belongs to the universal ribosomal protein uS8 family. As to quaternary structure, part of the 30S ribosomal subunit. Contacts proteins S5 and S12.

One of the primary rRNA binding proteins, it binds directly to 16S rRNA central domain where it helps coordinate assembly of the platform of the 30S subunit. This chain is Small ribosomal subunit protein uS8, found in Acinetobacter baylyi (strain ATCC 33305 / BD413 / ADP1).